The sequence spans 247 residues: uncharacterized protein (247 aa).

Positions 1–35 are cleaved as a signal peptide; the sequence is MWGPGVTAEGLSVAPAPPPLLPLLLLLALALVAPS. The helical transmembrane segment at 82–102 threads the bilayer; sequence LSGLLILLVLFAIGYFLQRII. The segment at 109–176 is disordered; the sequence is YPRGQARPGQ…RGSGGRLPPS (68 aa). Residues 111–120 are compositionally biased toward low complexity; the sequence is RGQARPGQAR. Gly residues predominate over residues 161-171; the sequence is SGGGRGRGSGG.

It is found in the membrane. This is an uncharacterized protein from Mus musculus (Mouse).